The sequence spans 366 residues: Pectinesterase A (366 aa).

A signal peptide spans 1–24 (MLKTISGTLALSLIIAASVHQAQA). Residues threonine 109 and glutamine 153 each contribute to the substrate site. Aspartate 178 serves as the catalytic Proton donor. Residues cysteine 192 and cysteine 212 are joined by a disulfide bond. Aspartate 199 functions as the Nucleophile in the catalytic mechanism. Substrate-binding residues include arginine 219, asparagine 226, tyrosine 230, arginine 267, tryptophan 269, and threonine 272.

The protein belongs to the pectinesterase family. As to quaternary structure, monomer.

Its subcellular location is the secreted. It carries out the reaction [(1-&gt;4)-alpha-D-galacturonosyl methyl ester](n) + n H2O = [(1-&gt;4)-alpha-D-galacturonosyl](n) + n methanol + n H(+). It functions in the pathway glycan metabolism; pectin degradation; 2-dehydro-3-deoxy-D-gluconate from pectin: step 1/5. Its function is as follows. Involved in maceration and soft-rotting of plant tissue. The sequence is that of Pectinesterase A (pemA) from Dickeya chrysanthemi (Pectobacterium chrysanthemi).